A 417-amino-acid chain; its full sequence is Vacuolar cation/proton exchanger 3 (417 aa).

Topologically, residues 1–45 (MENPQIEMGAFKANGPQLQNGGLRSSMVQSWNLQRFVESALRSIR) are cytoplasmic. The chain crosses the membrane as a helical span at residues 46 to 66 (IVIFTSKLNLLLPFGPASIIL). At 67–73 (HYTTSRH) the chain is on the extracellular side. Residues 74-94 (GLVFLFSMLGITPLAERLGYA) traverse the membrane as a helical segment. Residues 95–105 (TEQLAIYTGPT) lie on the Cytoplasmic side of the membrane. The chain crosses the membrane as a helical span at residues 106 to 126 (VGGLLNATFGNATEMIIAIYA). Residues 115 to 150 (GNATEMIIAIYALKNGMIRVVQQSLLGSILSNMLLV) are cation selection. The Extracellular segment spans residues 127–140 (LKNGMIRVVQQSLL). The helical transmembrane segment at 141 to 161 (GSILSNMLLVMGCAFFAGGIV) threads the bilayer. Residues 162–173 (HRNKDQVFSKAT) lie on the Cytoplasmic side of the membrane. The chain crosses the membrane as a helical span at residues 174 to 194 (AVVNSGLLLMAVMGLMFPAVL). The Extracellular segment spans residues 195-207 (HFTHSEVRQGASE). Residues 208–230 (VSLSRFSSCIMLVAYASYLYFQL) traverse the membrane as a helical segment. Topologically, residues 231–258 (SGRNNAYSPIGSEEMPNEDAAEEDEESE) are cytoplasmic. The chain crosses the membrane as a helical span at residues 259-279 (IGMWESIAWLAMLTLWVSILS). Topologically, residues 280–291 (EYLVNAIEGASD) are extracellular. A helical membrane pass occupies residues 292 to 312 (SLNLPVAFISVILLPIVGNAA). Positions 309 to 344 (GNAAEHASAIMFAMKDKLDITLGVAIGSSTQISMFV) are cation selection. Residues 313-330 (EHASAIMFAMKDKLDITL) are Cytoplasmic-facing. Residues 331–351 (GVAIGSSTQISMFVIPFCVVI) traverse the membrane as a helical segment. Residues 352–360 (GWMMGQKMD) lie on the Extracellular side of the membrane. The chain crosses the membrane as a helical span at residues 361-381 (LNFQLFETATLFITVLVVAFM). The Cytoplasmic segment spans residues 382 to 389 (LQDGVANY). A helical membrane pass occupies residues 390 to 410 (LKGLMLILCYLIVAASFFVHV). Over 411–417 (DPQSSDD) the chain is Extracellular.

This sequence belongs to the Ca(2+):cation antiporter (CaCA) (TC 2.A.19) family. Cation/proton exchanger (CAX) subfamily. In terms of tissue distribution, ubiquitous.

The protein localises to the vacuole membrane. Functionally, vacuolar cation/proton exchanger (CAX). Translocates Ca(2+) and other metal ions into vacuoles using the proton gradient formed by H(+)-ATPase and H(+)-pyrophosphatase. In Oryza sativa subsp. japonica (Rice), this protein is Vacuolar cation/proton exchanger 3 (CAX3).